The primary structure comprises 171 residues: 3-hydroxydecanoyl-[acyl-carrier-protein] dehydratase (171 aa).

H70 is a catalytic residue.

It belongs to the thioester dehydratase family. FabA subfamily. In terms of assembly, homodimer.

It is found in the cytoplasm. The enzyme catalyses a (3R)-hydroxyacyl-[ACP] = a (2E)-enoyl-[ACP] + H2O. It carries out the reaction (3R)-hydroxydecanoyl-[ACP] = (2E)-decenoyl-[ACP] + H2O. The catalysed reaction is (2E)-decenoyl-[ACP] = (3Z)-decenoyl-[ACP]. It functions in the pathway lipid metabolism; fatty acid biosynthesis. Its function is as follows. Necessary for the introduction of cis unsaturation into fatty acids. Catalyzes the dehydration of (3R)-3-hydroxydecanoyl-ACP to E-(2)-decenoyl-ACP and then its isomerization to Z-(3)-decenoyl-ACP. Can catalyze the dehydratase reaction for beta-hydroxyacyl-ACPs with saturated chain lengths up to 16:0, being most active on intermediate chain length. This chain is 3-hydroxydecanoyl-[acyl-carrier-protein] dehydratase, found in Pseudomonas fluorescens (strain SBW25).